Here is a 194-residue protein sequence, read N- to C-terminus: Methylthioribulose-1-phosphate dehydratase (194 aa).

Histidine 84 and histidine 86 together coordinate Zn(2+).

This sequence belongs to the aldolase class II family. MtnB subfamily. Zn(2+) serves as cofactor.

The catalysed reaction is 5-(methylsulfanyl)-D-ribulose 1-phosphate = 5-methylsulfanyl-2,3-dioxopentyl phosphate + H2O. It functions in the pathway amino-acid biosynthesis; L-methionine biosynthesis via salvage pathway; L-methionine from S-methyl-5-thio-alpha-D-ribose 1-phosphate: step 2/6. In terms of biological role, catalyzes the dehydration of methylthioribulose-1-phosphate (MTRu-1-P) into 2,3-diketo-5-methylthiopentyl-1-phosphate (DK-MTP-1-P). This is Methylthioribulose-1-phosphate dehydratase from Cronobacter sakazakii (Enterobacter sakazakii).